The primary structure comprises 138 residues: ATP synthase epsilon chain (138 aa).

Belongs to the ATPase epsilon chain family. As to quaternary structure, F-type ATPases have 2 components, CF(1) - the catalytic core - and CF(0) - the membrane proton channel. CF(1) has five subunits: alpha(3), beta(3), gamma(1), delta(1), epsilon(1). CF(0) has three main subunits: a, b and c.

It is found in the cell inner membrane. Produces ATP from ADP in the presence of a proton gradient across the membrane. The chain is ATP synthase epsilon chain from Bartonella henselae (strain ATCC 49882 / DSM 28221 / CCUG 30454 / Houston 1) (Rochalimaea henselae).